Here is a 190-residue protein sequence, read N- to C-terminus: Potassium-transporting ATPase KdpC subunit (190 aa).

Residues 7–27 (PALLMLLVWTLITGVFYPVLV) traverse the membrane as a helical segment.

Belongs to the KdpC family. In terms of assembly, the system is composed of three essential subunits: KdpA, KdpB and KdpC.

It is found in the cell inner membrane. Its function is as follows. Part of the high-affinity ATP-driven potassium transport (or Kdp) system, which catalyzes the hydrolysis of ATP coupled with the electrogenic transport of potassium into the cytoplasm. This subunit acts as a catalytic chaperone that increases the ATP-binding affinity of the ATP-hydrolyzing subunit KdpB by the formation of a transient KdpB/KdpC/ATP ternary complex. The protein is Potassium-transporting ATPase KdpC subunit of Methylococcus capsulatus (strain ATCC 33009 / NCIMB 11132 / Bath).